The sequence spans 76 residues: Omega-agatoxin-Aa3b (76 aa).

6 disulfide bridges follow: Cys2–Cys19, Cys9–Cys25, Cys16–Cys52, Cys18–Cys40, Cys27–Cys38, and Cys59–Cys67.

It belongs to the neurotoxin 04 (omega-agtx) family. 03 (type II/III omega-agtx) subfamily. Expressed by the venom gland.

It is found in the secreted. In terms of biological role, omega-agatoxins are antagonists of voltage-gated calcium channels. This toxin blocks calcium channels in insect central neurons but not at peripheral neuromuscular junctions. In vertebrates, it is broadly active against all high-threshold Cav1/CACNA1 channels and Cav2.2/CACNA1B channels. This chain is Omega-agatoxin-Aa3b, found in Agelenopsis aperta (North American funnel-web spider).